A 389-amino-acid chain; its full sequence is MQNLTNLSSRTYDQHFPKLSAEQLAENAKKKVIVGMSGGVDSSVSAFILQQQGYQVEGLFMKNWEEDDDTDYCTAAADLADAQAVADKLGMKLHKINFAAEYWDNVFEHFLAEYKAGRTPNPDILCNKEIKFKAFLEYAAEDLGADYIATGHYVRRRGDDENARLLRGLDSNKDQSYFLYTLSHKQVGQSLFPVGDIEKPIVRAIAEDLGLITAKKKDSTGICFIGERKFKDFLARFLPAQPGEIRTVDGKVIGRHDGLMYYTLGQRKGLGIGGIKGMDENPFYVAEKDLVNNVLIVAQGHDNSALLSSGLIARQLHWVDRQPIRENLRCTVKTRYRQTDIPCEIQPIDDETIRVIFDEPQIAVTPGQSAVFYQGEVCLGGGVIETQIK.

Residues 35–42 (GMSGGVDS) and Met-61 contribute to the ATP site. The interaction with target base in tRNA stretch occupies residues 121–123 (NPD). Cys-126 functions as the Nucleophile in the catalytic mechanism. A disulfide bond links Cys-126 and Cys-223. An ATP-binding site is contributed by Gly-151. The tract at residues 173-175 (KDQ) is interaction with tRNA. Cys-223 functions as the Cysteine persulfide intermediate in the catalytic mechanism. An interaction with tRNA region spans residues 335 to 336 (RY).

Belongs to the MnmA/TRMU family.

Its subcellular location is the cytoplasm. It carries out the reaction S-sulfanyl-L-cysteinyl-[protein] + uridine(34) in tRNA + AH2 + ATP = 2-thiouridine(34) in tRNA + L-cysteinyl-[protein] + A + AMP + diphosphate + H(+). Functionally, catalyzes the 2-thiolation of uridine at the wobble position (U34) of tRNA, leading to the formation of s(2)U34. In Mannheimia succiniciproducens (strain KCTC 0769BP / MBEL55E), this protein is tRNA-specific 2-thiouridylase MnmA.